The chain runs to 73 residues: U3-agatoxin-Ao1i (73 aa).

Residues methionine 1 to alanine 20 form the signal peptide. A propeptide spanning residues isoleucine 21–arginine 34 is cleaved from the precursor. Intrachain disulfides connect cysteine 36–cysteine 52, cysteine 43–cysteine 57, cysteine 51–cysteine 67, and cysteine 59–cysteine 65. Residue serine 71 is modified to Serine amide.

Belongs to the neurotoxin 07 (Beta/delta-agtx) family. 03 (aga-4) subfamily. Aga sub-subfamily. Expressed by the venom gland.

The protein resides in the secreted. Its function is as follows. Insecticidal neurotoxin that induces an irreversible spastic paralysis when injected into insects. Modifies presynaptic voltage-gated sodium channels (Nav), causing them to open at the normal resting potential of the nerve. This leads to spontaneous release of neurotransmitter and repetitive action potentials in motor neurons. The chain is U3-agatoxin-Ao1i from Agelena orientalis (Funnel-web spider).